The primary structure comprises 119 residues: Large ribosomal subunit protein bL20c (119 aa).

The protein belongs to the bacterial ribosomal protein bL20 family.

It is found in the plastid. The protein localises to the chloroplast. Functionally, binds directly to 23S ribosomal RNA and is necessary for the in vitro assembly process of the 50S ribosomal subunit. It is not involved in the protein synthesizing functions of that subunit. This is Large ribosomal subunit protein bL20c (rpl20) from Pinus thunbergii (Japanese black pine).